An 890-amino-acid polypeptide reads, in one-letter code: Inter-alpha-trypsin inhibitor heavy chain H3 (890 aa).

Residues 1-20 (MAFAWWPCLILALLSSLAAS) form the signal peptide. Positions 21–34 (GFPRSPFRLLGKRS) are excised as a propeptide. The region spanning 29–158 (LLGKRSLPEG…KVTFELTYEE (130 aa)) is the VIT domain. N91 is a glycosylation site (N-linked (GlcNAc...) asparagine). Positions 284-467 (NVAFVIDISG…LQLQGFYEEV (184 aa)) constitute a VWFA domain. N580 is a glycosylation site (N-linked (GlcNAc...) asparagine). D651 bears the Aspartate 1-(chondroitin 4-sulfate)-ester mark. Positions 652–890 (PHFIIQIPEK…HTDYIVPNLF (239 aa)) are excised as a propeptide.

It belongs to the ITIH family. As to quaternary structure, I-alpha-I plasma protease inhibitors are assembled from one or two heavy chains (HC) and one light chain, bikunin. Pre-alpha-inhibitor (P-alpha-I) is composed of ITIH3/HC3 and bikunin. Post-translationally, heavy chains are linked to bikunin via chondroitin 4-sulfate esterified to the alpha-carboxyl of the C-terminal aspartate after propeptide cleavage.

The protein resides in the secreted. Its function is as follows. May act as a carrier of hyaluronan in serum or as a binding protein between hyaluronan and other matrix protein, including those on cell surfaces in tissues to regulate the localization, synthesis and degradation of hyaluronan which are essential to cells undergoing biological processes. This chain is Inter-alpha-trypsin inhibitor heavy chain H3 (ITIH3), found in Homo sapiens (Human).